The following is a 434-amino-acid chain: Trigger factor (434 aa).

The 86-residue stretch at 161-246 (GDRVVIDFAG…VKGVEAPILP (86 aa)) folds into the PPIase FKBP-type domain.

It belongs to the FKBP-type PPIase family. Tig subfamily.

It is found in the cytoplasm. It catalyses the reaction [protein]-peptidylproline (omega=180) = [protein]-peptidylproline (omega=0). Functionally, involved in protein export. Acts as a chaperone by maintaining the newly synthesized protein in an open conformation. Functions as a peptidyl-prolyl cis-trans isomerase. The chain is Trigger factor from Aromatoleum aromaticum (strain DSM 19018 / LMG 30748 / EbN1) (Azoarcus sp. (strain EbN1)).